We begin with the raw amino-acid sequence, 526 residues long: Lycopene epsilon cyclase, chloroplastic (526 aa).

108–136 contributes to the NAD(+) binding site; sequence LVVIGCGPAGLALAAESAKLGLNVGLVGP. 2 consecutive transmembrane segments (helical) span residues 443–463 and 477–497; these read FFLF…RSFF and FLGS…MFII.

The protein belongs to the lycopene cyclase family.

It is found in the plastid. The protein resides in the chloroplast membrane. The enzyme catalyses a carotenoid psi-end group = a carotenoid epsilon-end group. It functions in the pathway carotenoid biosynthesis; alpha-zeacarotene biosynthesis. Its pathway is carotenoid biosynthesis; delta-carotene biosynthesis. Functionally, catalyzes the single cyclization reaction which converts lycopene to delta-carotene and neurosporene to alpha-zeacarotene. Required for lutein biosynthesis. The chain is Lycopene epsilon cyclase, chloroplastic from Solanum lycopersicum (Tomato).